The chain runs to 257 residues: NAD kinase (257 aa).

Catalysis depends on aspartate 46, which acts as the Proton acceptor. NAD(+) contacts are provided by residues 46–47 (DG), 116–117 (NE), aspartate 146, alanine 154, 157–162 (TAYNLS), and asparagine 218.

The protein belongs to the NAD kinase family. It depends on a divalent metal cation as a cofactor.

Its subcellular location is the cytoplasm. The catalysed reaction is NAD(+) + ATP = ADP + NADP(+) + H(+). In terms of biological role, involved in the regulation of the intracellular balance of NAD and NADP, and is a key enzyme in the biosynthesis of NADP. Catalyzes specifically the phosphorylation on 2'-hydroxyl of the adenosine moiety of NAD to yield NADP. This Brucella melitensis biotype 1 (strain ATCC 23456 / CCUG 17765 / NCTC 10094 / 16M) protein is NAD kinase.